The following is a 64-amino-acid chain: Sperm protamine P1 (64 aa).

The tract at residues 1–64 (MVRYRRHSRS…QSRRRRRRRY (64 aa)) is disordered.

It belongs to the protamine P1 family. Testis.

It localises to the nucleus. It is found in the chromosome. Its function is as follows. Protamines substitute for histones in the chromatin of sperm during the haploid phase of spermatogenesis. They compact sperm DNA into a highly condensed, stable and inactive complex. The sequence is that of Sperm protamine P1 (PRM1) from Dromiciops gliroides (Monito del Monte).